Here is a 297-residue protein sequence, read N- to C-terminus: uncharacterized protein (297 aa).

Residues 267 to 297 (NTQHAGKPGAQHRTRRSPPAFRRADRLRQSA) form a disordered region. Basic and acidic residues predominate over residues 288–297 (RRADRLRQSA).

This is an uncharacterized protein from Treponema pallidum (strain Nichols).